A 64-amino-acid chain; its full sequence is Small ribosomal subunit protein eS17 (64 aa).

This sequence belongs to the eukaryotic ribosomal protein eS17 family.

This Halorubrum lacusprofundi (strain ATCC 49239 / DSM 5036 / JCM 8891 / ACAM 34) protein is Small ribosomal subunit protein eS17.